The chain runs to 188 residues: Pyridoxal 5'-phosphate synthase subunit PdxT (188 aa).

46 to 48 (GES) provides a ligand contact to L-glutamine. The active-site Nucleophile is the C78. L-glutamine-binding positions include R105 and 134–135 (IR). Active-site charge relay system residues include H170 and E172.

This sequence belongs to the glutaminase PdxT/SNO family. In terms of assembly, in the presence of PdxS, forms a dodecamer of heterodimers. Only shows activity in the heterodimer.

The enzyme catalyses aldehydo-D-ribose 5-phosphate + D-glyceraldehyde 3-phosphate + L-glutamine = pyridoxal 5'-phosphate + L-glutamate + phosphate + 3 H2O + H(+). It carries out the reaction L-glutamine + H2O = L-glutamate + NH4(+). It participates in cofactor biosynthesis; pyridoxal 5'-phosphate biosynthesis. Catalyzes the hydrolysis of glutamine to glutamate and ammonia as part of the biosynthesis of pyridoxal 5'-phosphate. The resulting ammonia molecule is channeled to the active site of PdxS. In Desulforamulus reducens (strain ATCC BAA-1160 / DSM 100696 / MI-1) (Desulfotomaculum reducens), this protein is Pyridoxal 5'-phosphate synthase subunit PdxT.